Reading from the N-terminus, the 239-residue chain is 1-(5-phosphoribosyl)-5-[(5-phosphoribosylamino)methylideneamino] imidazole-4-carboxamide isomerase (239 aa).

The Proton acceptor role is filled by Asp8. The active-site Proton donor is the Asp129.

This sequence belongs to the HisA/HisF family.

The protein resides in the cytoplasm. The enzyme catalyses 1-(5-phospho-beta-D-ribosyl)-5-[(5-phospho-beta-D-ribosylamino)methylideneamino]imidazole-4-carboxamide = 5-[(5-phospho-1-deoxy-D-ribulos-1-ylimino)methylamino]-1-(5-phospho-beta-D-ribosyl)imidazole-4-carboxamide. It functions in the pathway amino-acid biosynthesis; L-histidine biosynthesis; L-histidine from 5-phospho-alpha-D-ribose 1-diphosphate: step 4/9. In Bacillus cytotoxicus (strain DSM 22905 / CIP 110041 / 391-98 / NVH 391-98), this protein is 1-(5-phosphoribosyl)-5-[(5-phosphoribosylamino)methylideneamino] imidazole-4-carboxamide isomerase.